Reading from the N-terminus, the 742-residue chain is Alcohol dehydrogenase (quinone), dehydrogenase subunit (742 aa).

The first 35 residues, 1–35 (MTRPASAKRRSLLGILAAGTICAAALPYAAVPARA), serve as a signal peptide directing secretion. Position 96 (glutamate 96) interacts with pyrroloquinoline quinone. The cysteines at positions 142 and 143 are disulfide-linked. Arginine 148 contributes to the pyrroloquinoline quinone binding site. Glutamate 216 lines the Ca(2+) pocket. Threonine 278 serves as a coordination point for pyrroloquinoline quinone. The Ca(2+) site is built by asparagine 298 and aspartate 343. Residue aspartate 343 is the Proton acceptor of the active site. Pyrroloquinoline quinone-binding residues include lysine 370 and isoleucine 584. Residues 636–715 (KVVDNGYFQY…AIRQYLIKRA (80 aa)) enclose the Cytochrome c domain. The heme c site is built by cysteine 649, cysteine 652, histidine 653, and methionine 692. Over residues 722–732 (EVDARKNDKNI) the composition is skewed to basic and acidic residues. Residues 722–742 (EVDARKNDKNIPENPTLGINP) are disordered.

The protein belongs to the bacterial PQQ dehydrogenase family. As to quaternary structure, the alcohol dehydrogenase multicomponent enzyme system is composed of a dehydrogenase subunit I (AdhA) and a cytochrome c subunit II (AdhB). It depends on pyrroloquinoline quinone as a cofactor. The cofactor is Ca(2+). Heme c serves as cofactor.

It localises to the cell membrane. The enzyme catalyses ethanol + a ubiquinone = a ubiquinol + acetaldehyde. In terms of biological role, dehydrogenase component of the alcohol dehydrogenase multicomponent enzyme system which is involved in the production of acetic acid and in the ethanol oxidase respiratory chain. Quinohemoprotein alcohol dehydrogenase (ADH) catalyzes the oxidation of ethanol to acetaldehyde by transferring electrons to the ubiquinone embedded in the membrane phospholipids. The electrons transfer from ethanol to membranous ubiquinone occurs from pyrroloquinoline quinone (PQQ) to one heme c in subunit I (AdhA), and finally to two heme c in subunit II (AdhB). Besides ubiquinone reduction, ADH also has a ubiquinol (QH2) oxidation reaction which mediates electron transfer from ubiquinol to the non-energy generating bypass oxidase system. The electrons transfer occurs from ubiquinol (QH2) to the additional heme c within subunit II (AdhB). This is Alcohol dehydrogenase (quinone), dehydrogenase subunit from Acetobacter aceti.